A 523-amino-acid polypeptide reads, in one-letter code: MSNRVIIFDTTLRDGEQALAASLTVKEKLQIALSLERLGVDVMEVGFPVSSPGDFKSVETIARTVKNSRVCALARALEKDIDAAAQSLSVADQFRIHTFISTSTIHVESKLKRSFDQVLEMAVGAVKYARRFTDDVEFSCEDAGRTPIDNLCRMVEEAIKAGAKTINIPDTVGYTVPSEFGGIIETLFNRVPNIDQAVISVHCHDDLGLSVANSITAVQQGARQIECTVNGIGERAGNCSLEEIAMILSTRKAALGLETGINAKEIHRTSSLVSQLCNMPVQANKAIVGANAFTHSSGIHQDGMLKSQNTYEIMTPESIGLPRNNLNMTSRSGRHVIKHRMEEMGYGEHDYDMDVLYESFLKLADKKGQVFDYDLEALTFMEAQAEEESFYQLKQLVVHSDSTQGNATATVKIELDGEVVTEAATGNGPVDAAYNAIARASKCEINITSYKLSAKGEGQDALGQVDIEASYQQQSFHGVGLATDVVEASVQALIHVMNLTWRADKVADCKQKIQQKARSLGGV.

Residues 5–267 (VIIFDTTLRD…ETGINAKEIH (263 aa)) form the Pyruvate carboxyltransferase domain. Mn(2+)-binding residues include Asp-14, His-202, His-204, and Asn-238. Positions 392 to 523 (QLKQLVVHSD…QQKARSLGGV (132 aa)) are regulatory domain.

It belongs to the alpha-IPM synthase/homocitrate synthase family. LeuA type 1 subfamily. Homodimer. Requires Mn(2+) as cofactor.

The protein localises to the cytoplasm. The catalysed reaction is 3-methyl-2-oxobutanoate + acetyl-CoA + H2O = (2S)-2-isopropylmalate + CoA + H(+). It participates in amino-acid biosynthesis; L-leucine biosynthesis; L-leucine from 3-methyl-2-oxobutanoate: step 1/4. Catalyzes the condensation of the acetyl group of acetyl-CoA with 3-methyl-2-oxobutanoate (2-ketoisovalerate) to form 3-carboxy-3-hydroxy-4-methylpentanoate (2-isopropylmalate). The sequence is that of 2-isopropylmalate synthase from Shewanella woodyi (strain ATCC 51908 / MS32).